A 513-amino-acid polypeptide reads, in one-letter code: GMP synthase [glutamine-hydrolyzing] (513 aa).

In terms of domain architecture, Glutamine amidotransferase type-1 spans lysine 8–asparagine 198. Cysteine 85 (nucleophile) is an active-site residue. Catalysis depends on residues histidine 172 and glutamate 174. The 190-residue stretch at tryptophan 199–arginine 388 folds into the GMPS ATP-PPase domain. An ATP-binding site is contributed by serine 226–serine 232.

As to quaternary structure, homodimer.

The catalysed reaction is XMP + L-glutamine + ATP + H2O = GMP + L-glutamate + AMP + diphosphate + 2 H(+). It participates in purine metabolism; GMP biosynthesis; GMP from XMP (L-Gln route): step 1/1. Its function is as follows. Catalyzes the synthesis of GMP from XMP. This is GMP synthase [glutamine-hydrolyzing] from Lactococcus lactis subsp. cremoris (strain SK11).